A 444-amino-acid polypeptide reads, in one-letter code: Homogentisate 1,2-dioxygenase (444 aa).

The active-site Proton acceptor is the His-298. Positions 341 and 347 each coordinate Fe cation. Positions 356 and 377 each coordinate homogentisate. His-377 serves as a coordination point for Fe cation.

The protein belongs to the homogentisate dioxygenase family. In terms of assembly, hexamer; dimer of trimers. It depends on Fe cation as a cofactor.

It catalyses the reaction homogentisate + O2 = 4-maleylacetoacetate + H(+). It functions in the pathway amino-acid degradation; L-phenylalanine degradation; acetoacetate and fumarate from L-phenylalanine: step 4/6. In terms of biological role, involved in the catabolism of homogentisate (2,5-dihydroxyphenylacetate or 2,5-OH-PhAc), a central intermediate in the degradation of phenylalanine and tyrosine. Catalyzes the oxidative ring cleavage of the aromatic ring of homogentisate to yield maleylacetoacetate. The chain is Homogentisate 1,2-dioxygenase from Burkholderia orbicola (strain MC0-3).